Here is an 836-residue protein sequence, read N- to C-terminus: Granulocyte colony-stimulating factor receptor (836 aa).

The first 24 residues, 1 to 24 (MARLGNCSLTWAALIILLLPGSLE), serve as a signal peptide directing secretion. Positions 25 to 117 (ECGHISVSAP…SLQILDQVEL (93 aa)) constitute an Ig-like C2-type domain. Over 25–627 (ECGHISVSAP…TLTPEGSELH (603 aa)) the chain is Extracellular. 2 disulfides stabilise this stretch: cysteine 26-cysteine 52 and cysteine 46-cysteine 101. N-linked (GlcNAc...) asparagine glycans are attached at residues asparagine 51, asparagine 93, asparagine 128, and asparagine 134. 5 consecutive Fibronectin type-III domains span residues 125 to 230 (IPHN…LEPP), 233 to 332 (RTMD…TTER), 334 to 430 (PTVR…SRGP), 431 to 528 (ALTR…MAPS), and 530 to 623 (APEL…TPEG). 5 disulfide bridges follow: cysteine 131–cysteine 142, cysteine 167–cysteine 218, cysteine 177–cysteine 186, cysteine 248–cysteine 295, and cysteine 266–cysteine 309. The WSXWS motif motif lies at 318–322 (WSDWS). N-linked (GlcNAc...) asparagine glycosylation is found at asparagine 389, asparagine 474, asparagine 579, and asparagine 610. A helical membrane pass occupies residues 628-650 (IILGLFGLLLLLTCLCGTAWLCC). At 651–836 (SPNRKNPLWP…VHGMEALGSF (186 aa)) the chain is on the cytoplasmic side. A Box 1 motif motif is present at residues 658–666 (LWPSVPDPA).

Belongs to the type I cytokine receptor family. Type 2 subfamily. In terms of assembly, homodimer. The dimeric receptor binds two CSF3 molecules. Interacts with CEACAM1; down-regulates the CSF3R-STAT3 pathway through recruitment of PTPN6 that dephosphorylates CSF3R. In terms of processing, N-glycosylated. One or several isoforms have been found in myelogenous leukemia cell line KG-1, leukemia U-937 cell line, in bone marrow cells, placenta, and peripheral blood granulocytes. Isoform GCSFR-2 is found only in leukemia U-937 cells. Isoform GCSFR-3 is highly expressed in placenta.

The protein resides in the secreted. Its subcellular location is the cell membrane. Its function is as follows. Receptor for granulocyte colony-stimulating factor (CSF3), essential for granulocytic maturation. Plays a crucial role in the proliferation, differentiation and survival of cells along the neutrophilic lineage. In addition it may function in some adhesion or recognition events at the cell surface. In Homo sapiens (Human), this protein is Granulocyte colony-stimulating factor receptor (CSF3R).